Consider the following 145-residue polypeptide: Cystatin-F (145 aa).

Residues 1–19 (MRAAGTLLAFCCLVLSTTG) form the signal peptide. N-linked (GlcNAc...) asparagine glycosylation is present at asparagine 62. The Secondary area of contact signature appears at 81–85 (QIVKG). A disulfide bond links cysteine 99 and cysteine 110. Asparagine 115 is a glycosylation site (N-linked (GlcNAc...) asparagine). Cysteine 124 and cysteine 144 are oxidised to a cystine.

It belongs to the cystatin family. Homodimer; disulfide-linked. Primarily expressed in peripheral blood cells and spleen.

The protein localises to the secreted. It localises to the cytoplasm. Functionally, inhibits papain and cathepsin L but with affinities lower than other cystatins. May play a role in immune regulation through inhibition of a unique target in the hematopoietic system. This Homo sapiens (Human) protein is Cystatin-F (CST7).